A 126-amino-acid polypeptide reads, in one-letter code: uncharacterized protein (126 aa).

In terms of domain architecture, HIT spans 19 to 126 (IFERIIEGAV…LGGGLLGSIA (108 aa)). The Histidine triad motif motif lies at 111–115 (HLHIH).

This is an uncharacterized protein from Chlamydia muridarum (strain MoPn / Nigg).